Here is a 422-residue protein sequence, read N- to C-terminus: Phosphoribosylamine--glycine ligase (422 aa).

Residues 107–313 form the ATP-grasp domain; that stretch reads KDLMKKYDIP…LVQVLLDLLD (207 aa). 133–194 serves as a coordination point for ATP; the sequence is VQEKGAPIVI…EEYLSGEEFS (62 aa). Residues Glu-283 and Asn-285 each coordinate Mg(2+).

Belongs to the GARS family. The cofactor is Mg(2+). Mn(2+) serves as cofactor.

The enzyme catalyses 5-phospho-beta-D-ribosylamine + glycine + ATP = N(1)-(5-phospho-beta-D-ribosyl)glycinamide + ADP + phosphate + H(+). It functions in the pathway purine metabolism; IMP biosynthesis via de novo pathway; N(1)-(5-phospho-D-ribosyl)glycinamide from 5-phospho-alpha-D-ribose 1-diphosphate: step 2/2. This chain is Phosphoribosylamine--glycine ligase, found in Bacillus subtilis (strain 168).